We begin with the raw amino-acid sequence, 87 residues long: MARKRGGSGSKNGRDSNPKYLGVKLFGGQHARAGSILVRQRGTRIHPGENVGRGKDDTLFALAPGVVTYLQRKGRRLVSVCVENRPS.

The tract at residues 1 to 20 is disordered; the sequence is MARKRGGSGSKNGRDSNPKY.

Belongs to the bacterial ribosomal protein bL27 family.

The protein is Large ribosomal subunit protein bL27 (rpmA) of Treponema pallidum (strain Nichols).